The following is a 950-amino-acid chain: MITIPSHEFTDLLNEISKKWQEEWSKNRIFEADPKDQKKFFTTVAFPYPNSPFHLGHGRTYVTGDVYARFMRMKGYNVLFPMGFHFTGTPIITMADDVAKGDKDLLDIFQNIYEIPADVIPKLSDPLFMANYFKEDIKAAMREIGLSIDWRREFTTIDPQFSAFIVWQFSKLQKKGYVVKDTHPVGWCPVHNLPVGMHDTKGDMEPEIGEYVVIFFESKMGALAAATLRPETIFGAVAVWVNPKATYTVAEIWGKKVIVSEKAAEKLKFQTDVKVLEKVSGSDLLKIVAINPITGKEIPILPADFVDPTTATGVVMSVPAHAPFDYFYLKKAKVGIEPIPVVAVEGQGDAPAKDLVESSHPKNDADLKKLTEQLYRLEFNKGLMRSDILRLVKDELRAELSVVAGKQVPEARKMVTDILIQRKAGTKMLEIMNKPVYCRCGNEVVVKILQDQWFLDYGNPEWKAKAKKLLDSMRVIPEETRKDFEYALDWLQKRACARTRGLGTPLPWDKKWIIESLSDSTIYMAYYTLSHKIKEFGLHPSQLTEETWDYIMLGEGDVKAISERNKIGVDALQELRRHFTYWYPLDLRHSGPDLIPNHLSFFIFNHAGIFPENLWPRGVAVNGFILYEGKKMSKSLRNIVPLRKAIRTYGADVIRIALSSLVDMSSDANFTEAGARAIADNLKRFYELMQMQDGSTIDGTPEKWLRSKLHRLVRDVTPLMESMRFREVINELLFNLSSYINEYLEMVRSESREYNRDVIREVVETWTKLMAPFAPHLTEEMWHQLGHNTFLSLESWPTPDNSKINDQIELEHEYHKLLIEDIRAILNVYKGKPSSVLLYVHDGSLNQVVKSALDVLNSGGTMKDFMQKNTPKSKEEARVLQRIMQYVTEMPETVKKLIYSNVNEMEVTRKGVPLLRYKLNLEIEVLAYTQEVKQKLNKDALPYRPAILVK.

The 'HIGH' region signature appears at 47–57; it reads PYPNSPFHLGH. Residues 631 to 635 carry the 'KMSKS' region motif; it reads KMSKS. ATP is bound at residue Lys634.

This sequence belongs to the class-I aminoacyl-tRNA synthetase family.

It localises to the cytoplasm. The catalysed reaction is tRNA(Leu) + L-leucine + ATP = L-leucyl-tRNA(Leu) + AMP + diphosphate. This chain is Leucine--tRNA ligase 2, found in Metallosphaera sedula (strain ATCC 51363 / DSM 5348 / JCM 9185 / NBRC 15509 / TH2).